The sequence spans 372 residues: Glutamine synthetase (372 aa).

One can recognise a GS beta-grasp domain in the interval 26–105 (IIAEYVWIDS…VLAECWNNDG (80 aa)). The 261-residue stretch at 112-372 (HRHEAAKLFE…MTKEYERESL (261 aa)) folds into the GS catalytic domain.

This sequence belongs to the glutamine synthetase family. In terms of assembly, homooctamer.

The protein resides in the cytoplasm. It carries out the reaction L-glutamate + NH4(+) + ATP = L-glutamine + ADP + phosphate + H(+). The sequence is that of Glutamine synthetase (GLN1) from Kluyveromyces lactis (strain ATCC 8585 / CBS 2359 / DSM 70799 / NBRC 1267 / NRRL Y-1140 / WM37) (Yeast).